A 290-amino-acid polypeptide reads, in one-letter code: MNSKTNQTAKTFGIVGFPLSHSLSPLIHNSIYKDRGIDASYLVFETPELNSKTIQEFRNSGILGLSVTIPHKEKAFLLADKADSTSTIMKASNTLLIGPDSIHAYNTDGEGAYRSILELSPESLNVGNTVILGSGGSARGIAYNLAASGKIQNLFLCSRNEMTAKEICFLISKNSNVKMEHITQDSLFSRKEEISLVIHTTPLGMKGQAPGPFLSEKFFNPNMTLFDIVYNPLETPLVKAAKKAGAKIIPGSEMLLHQAMKQFELFTGISPNASDILKTRERLSQTLTNQ.

Shikimate-binding positions include 22 to 24 and Thr68; that span reads SLS. Lys72 functions as the Proton acceptor in the catalytic mechanism. Shikimate contacts are provided by Asn93 and Asp108. NADP(+) contacts are provided by residues 133 to 137 and Ile228; that span reads GSGGS. Position 230 (Tyr230) interacts with shikimate. Gly251 provides a ligand contact to NADP(+).

It belongs to the shikimate dehydrogenase family. Homodimer.

It catalyses the reaction shikimate + NADP(+) = 3-dehydroshikimate + NADPH + H(+). It functions in the pathway metabolic intermediate biosynthesis; chorismate biosynthesis; chorismate from D-erythrose 4-phosphate and phosphoenolpyruvate: step 4/7. In terms of biological role, involved in the biosynthesis of the chorismate, which leads to the biosynthesis of aromatic amino acids. Catalyzes the reversible NADPH linked reduction of 3-dehydroshikimate (DHSA) to yield shikimate (SA). The protein is Shikimate dehydrogenase (NADP(+)) of Leptospira borgpetersenii serovar Hardjo-bovis (strain JB197).